The following is a 445-amino-acid chain: Xylose isomerase (445 aa).

Residues H107 and D110 contribute to the active site. Residues E238, E274, H277, D302, D313, D315, and D345 each contribute to the Mg(2+) site.

Belongs to the xylose isomerase family. Homotetramer. It depends on Mg(2+) as a cofactor.

The protein resides in the cytoplasm. The catalysed reaction is alpha-D-xylose = alpha-D-xylulofuranose. The sequence is that of Xylose isomerase from Bacillus cereus (strain ATCC 10987 / NRS 248).